We begin with the raw amino-acid sequence, 619 residues long: (-)-camphene synthase, chloroplastic (619 aa).

The transit peptide at 1–47 directs the protein to the chloroplast; sequence MALVSVAPLVSMRRSLFSSPYELKSIDKTIPNLVMCRKRMSGTPSIR. Residues Asp370, Asp374, and Asp522 each contribute to the Mg(2+) site. Residues 370–374 carry the DDXXD motif motif; the sequence is DDIYD.

Belongs to the terpene synthase family. Tpsd subfamily. Requires Mg(2+) as cofactor. Mn(2+) is required as a cofactor.

The protein localises to the plastid. Its subcellular location is the chloroplast. It carries out the reaction (2E)-geranyl diphosphate = (1S,4R)-camphene + diphosphate. The enzyme catalyses (2E)-geranyl diphosphate = (1R,5R)-alpha-pinene + diphosphate. The catalysed reaction is (2E)-geranyl diphosphate = tricyclene + diphosphate. It catalyses the reaction (2E)-geranyl diphosphate = beta-myrcene + diphosphate. It carries out the reaction (2E)-geranyl diphosphate = (1S,5S)-beta-pinene + diphosphate. The enzyme catalyses (2E)-geranyl diphosphate = (1S,5S)-alpha-pinene + diphosphate. It functions in the pathway terpene metabolism; oleoresin biosynthesis. It participates in secondary metabolite biosynthesis; terpenoid biosynthesis. Its function is as follows. Monoterpene synthase (TPS) involved in the biosynthesis of monoterpene natural products included in conifer oleoresin secretions and volatile emissions; these compounds contribute to biotic and abiotic stress defense against herbivores and pathogens. Catalyzes the conversion of (2E)-geranyl diphosphate (GPP) to (-)-camphene, (+)-alpha-pinene and (-)-alpha-pinene, and, to a lower extent, to tricyclene, myrcene and (-)-beta-pinene. This is (-)-camphene synthase, chloroplastic from Pinus contorta (Shore pine).